The following is a 274-amino-acid chain: NAD kinase (274 aa).

The active-site Proton acceptor is the Asp-60. Residues 60–61, Lys-65, 127–128, and Arg-152 each bind NAD(+); these read DG and NE.

The protein belongs to the NAD kinase family. The cofactor is a divalent metal cation.

Its subcellular location is the cytoplasm. The enzyme catalyses NAD(+) + ATP = ADP + NADP(+) + H(+). In terms of biological role, involved in the regulation of the intracellular balance of NAD and NADP, and is a key enzyme in the biosynthesis of NADP. Catalyzes specifically the phosphorylation on 2'-hydroxyl of the adenosine moiety of NAD to yield NADP. This Mycoplasmoides gallisepticum (strain R(low / passage 15 / clone 2)) (Mycoplasma gallisepticum) protein is NAD kinase.